A 285-amino-acid chain; its full sequence is HTH-type transcriptional regulator MurR (285 aa).

The HTH rpiR-type domain occupies Met-1–Ser-77. A DNA-binding region (H-T-H motif) is located at residues Ser-37–Gln-56. An SIS domain is found at Ile-128 to Val-268.

As to quaternary structure, homotetramer.

The protein operates within amino-sugar metabolism; N-acetylmuramate degradation [regulation]. Represses the expression of the murPQ operon involved in the uptake and degradation of N-acetylmuramic acid (MurNAc). Binds to two adjacent inverted repeats within the operator region. MurNAc 6-phosphate, the substrate of MurQ, is the specific inducer that weakens binding of MurR to the operator. The chain is HTH-type transcriptional regulator MurR from Escherichia coli O139:H28 (strain E24377A / ETEC).